An 89-amino-acid chain; its full sequence is Small ribosomal subunit protein uS15 (89 aa).

This sequence belongs to the universal ribosomal protein uS15 family. As to quaternary structure, part of the 30S ribosomal subunit. Forms a bridge to the 50S subunit in the 70S ribosome, contacting the 23S rRNA.

In terms of biological role, one of the primary rRNA binding proteins, it binds directly to 16S rRNA where it helps nucleate assembly of the platform of the 30S subunit by binding and bridging several RNA helices of the 16S rRNA. Functionally, forms an intersubunit bridge (bridge B4) with the 23S rRNA of the 50S subunit in the ribosome. This is Small ribosomal subunit protein uS15 from Bartonella tribocorum (strain CIP 105476 / IBS 506).